The following is a 335-amino-acid chain: Aspartate--ammonia ligase (335 aa).

It belongs to the class-II aminoacyl-tRNA synthetase family. AsnA subfamily.

It is found in the cytoplasm. The catalysed reaction is L-aspartate + NH4(+) + ATP = L-asparagine + AMP + diphosphate + H(+). It functions in the pathway amino-acid biosynthesis; L-asparagine biosynthesis; L-asparagine from L-aspartate (ammonia route): step 1/1. In Levilactobacillus brevis (strain ATCC 367 / BCRC 12310 / CIP 105137 / JCM 1170 / LMG 11437 / NCIMB 947 / NCTC 947) (Lactobacillus brevis), this protein is Aspartate--ammonia ligase.